The primary structure comprises 369 residues: Ribonuclease 3 (369 aa).

Positions 6–142 (IGFVQSSINY…IIGAVAADCD (137 aa)) constitute an RNase III domain. Glu-46 provides a ligand contact to Mg(2+). Residue Asp-50 is part of the active site. 2 residues coordinate Mg(2+): Asp-128 and Glu-131. Glu-131 is an active-site residue. Residues 272 to 341 (NPASTLHELF…SLKLLKFIAK (70 aa)) form the DRBM domain.

The protein belongs to the ribonuclease III family. In terms of assembly, homodimer. It depends on Mg(2+) as a cofactor.

The protein resides in the cytoplasm. The catalysed reaction is Endonucleolytic cleavage to 5'-phosphomonoester.. In terms of biological role, digests double-stranded RNA. Involved in the processing of primary rRNA transcript to yield the immediate precursors to the large and small rRNAs (23S and 16S). Processes some mRNAs, and tRNAs when they are encoded in the rRNA operon. Processes pre-crRNA and tracrRNA of type II CRISPR loci if present in the organism. In Treponema succinifaciens (strain ATCC 33096 / DSM 2489 / 6091), this protein is Ribonuclease 3 (rnc).